Consider the following 899-residue polypeptide: Ewing's tumor-associated antigen 1 homolog (899 aa).

A disordered region spans residues 1–82 (MSRRRKHGDS…TEERYETPKR (82 aa)). A compositionally biased stretch (basic and acidic residues) spans 71–81 (SNTEERYETPK). An ATR-activation domain (AAD) motif is present at residues 105–111 (IFWDQNS). Positions 180-210 (TKLKSQNQEEELMKLAKQFDKNMEELDVIQE) form a coiled coil. Glycyl lysine isopeptide (Lys-Gly) (interchain with G-Cter in SUMO2) cross-links involve residues Lys416 and Lys444. At Ser467 the chain carries Phosphoserine. Residues Lys485 and Lys539 each participate in a glycyl lysine isopeptide (Lys-Gly) (interchain with G-Cter in SUMO2) cross-link. Residues 607 to 622 (DDVDDDILYQACDDIE) carry the RBM1 motif motif. Phosphoserine is present on Ser810. Residues 833–899 (NKTVNPLPGK…AQASSVKKGR (67 aa)) form a disordered region. The segment covering 859-877 (PSKEEEEKNRKCSPEEIQR) has biased composition (basic and acidic residues). An RBM2 motif motif is present at residues 868-890 (RKCSPEEIQRKRQAALIRRMAKA).

In terms of assembly, interacts (via RBM1 motif) with RPA1. Interacts (via RBM2 motif) with RPA2. Interacts (via the ATR-activation domain motif) with ATR. Post-translationally, phosphorylated by ATR.

Its subcellular location is the nucleus. Its function is as follows. Replication stress response protein that accumulates at DNA damage sites and promotes replication fork progression and integrity. Recruited to stalled replication forks via interaction with the RPA complex and directly stimulates ATR kinase activity independently of TOPBP1. Probably only regulates a subset of ATR targets. The protein is Ewing's tumor-associated antigen 1 homolog of Bos taurus (Bovine).